A 352-amino-acid polypeptide reads, in one-letter code: Keratocan (352 aa).

The N-terminal stretch at 1-20 is a signal peptide; sequence MASTICFILWVVFVTDTVWT. The 39-residue stretch at 33–71 folds into the LRRNT domain; the sequence is EDWTMHDFDCPRECFCPPSFPTALYCENRGLKEIPAIPS. 2 cysteine pairs are disulfide-bonded: C42-C48 and C46-C58. LRR repeat units lie at residues 72–93, 96–117, 122–142, 143–164, 167–180, 193–214, 215–235, and 238–258; these read RIWY…PFEN, QLRW…KGAL, KLLF…PLPR, SLEQ…TFSN, NLTL…KLLD, NLMQ…LPAN, TMQV…YFNV, and KVAF…PSSG. The N-linked (GlcNAc...) (keratan sulfate) asparagine glycan is linked to N93. N167 is a glycosylation site (N-linked (GlcNAc...) (keratan sulfate) asparagine). N222 is a glycosylation site (N-linked (GlcNAc...) asparagine). An N-linked (GlcNAc...) (keratan sulfate) asparagine glycan is attached at N260. LRR repeat units follow at residues 263 to 282 and 283 to 304; these read SILD…KISA and HLQH…VICP. An N-linked (GlcNAc...) asparagine glycan is attached at N298. C303 and C343 are oxidised to a cystine.

It belongs to the small leucine-rich proteoglycan (SLRP) family. SLRP class II subfamily. Post-translationally, binds three long, highly sulfated keratan sulfate chains in the cornea but short, non-sulfated poly(N-acetyllactosamine) chains in other tissues. The N-terminus is blocked. In terms of tissue distribution, abundant in cornea and sclera but also found in other tissues.

Its subcellular location is the secreted. The protein localises to the extracellular space. It is found in the extracellular matrix. Its function is as follows. May be important in developing and maintaining corneal transparency and for the structure of the stromal matrix. In Bos taurus (Bovine), this protein is Keratocan (KERA).